The primary structure comprises 133 residues: Fatty acid-binding protein (133 aa).

This sequence belongs to the calycin superfamily. Fatty-acid binding protein (FABP) family.

The chain is Fatty acid-binding protein from Clonorchis sinensis (Chinese liver fluke).